Consider the following 360-residue polypeptide: S-adenosylmethionine:tRNA ribosyltransferase-isomerase (360 aa).

Belongs to the QueA family. As to quaternary structure, monomer.

It is found in the cytoplasm. The catalysed reaction is 7-aminomethyl-7-carbaguanosine(34) in tRNA + S-adenosyl-L-methionine = epoxyqueuosine(34) in tRNA + adenine + L-methionine + 2 H(+). The protein operates within tRNA modification; tRNA-queuosine biosynthesis. In terms of biological role, transfers and isomerizes the ribose moiety from AdoMet to the 7-aminomethyl group of 7-deazaguanine (preQ1-tRNA) to give epoxyqueuosine (oQ-tRNA). In Sinorhizobium medicae (strain WSM419) (Ensifer medicae), this protein is S-adenosylmethionine:tRNA ribosyltransferase-isomerase.